Reading from the N-terminus, the 480-residue chain is G-rich sequence factor 1 (480 aa).

Residues 1-117 (MAGTRWVLGA…AAAAVPTRSY (117 aa)) constitute a mitochondrion transit peptide. 2 RRM domains span residues 122-246 (KTTY…SSPV) and 250-326 (GVVR…PSRR). The residue at position 244 (Ser-244) is a Phosphoserine. Ser-335 is subject to Phosphoserine. Residues 401 to 480 (HFVHMRGLPF…LFLNSCPKGK (80 aa)) form the RRM 3 domain.

As to quaternary structure, monomer. Found in a complex with DDX28, DHX30, FASTKD2 and FASTKD5. Interacts with the mitochondrial RNase P complex subunit TRMT10C/MRPP1. Interacts with the 2 components of the mitochondrial degradosome complex, PNPT1 and SUPV3L1, in an RNA-dependent manner.

The protein localises to the mitochondrion matrix. Its subcellular location is the cytoplasm. Functionally, regulator of post-transcriptional mitochondrial gene expression, required for assembly of the mitochondrial ribosome and for recruitment of mRNA and lncRNA. Binds RNAs containing the 14 base G-rich element. Preferentially binds RNAs transcribed from three contiguous genes on the light strand of mtDNA, the ND6 mRNA, and the long non-coding RNAs for MT-CYB and MT-ND5, each of which contains multiple consensus binding sequences. Involved in the degradosome-mediated decay of non-coding mitochondrial transcripts (MT-ncRNA) and tRNA-like molecules. Acts by unwinding G-quadruplex RNA structures in MT-ncRNA, thus facilitating their degradation by the degradosome. G-quadruplexes (G4) are non-canonical 4 stranded structures formed by transcripts from the light strand of mtDNA. The chain is G-rich sequence factor 1 (GRSF1) from Homo sapiens (Human).